The primary structure comprises 245 residues: tRNA (guanine-N(1)-)-methyltransferase (245 aa).

Residues G111 and 131 to 136 (MGDYVL) each bind S-adenosyl-L-methionine.

The protein belongs to the RNA methyltransferase TrmD family. Homodimer.

The protein localises to the cytoplasm. It catalyses the reaction guanosine(37) in tRNA + S-adenosyl-L-methionine = N(1)-methylguanosine(37) in tRNA + S-adenosyl-L-homocysteine + H(+). Its function is as follows. Specifically methylates guanosine-37 in various tRNAs. The chain is tRNA (guanine-N(1)-)-methyltransferase from Staphylococcus aureus (strain MRSA252).